A 408-amino-acid polypeptide reads, in one-letter code: Multidrug resistance protein MdtG (408 aa).

A run of 11 helical transmembrane segments spans residues 16–36 (LIVA…VMPF), 58–78 (IVFS…GGLA), 92–112 (LGMG…QFLI), 115–135 (ALLG…ATQV), 146–166 (TLST…GLLA), 173–193 (PVFF…LFCI), 224–244 (LFVT…ILTL), 256–276 (VAFI…LSAP), 290–310 (ILIT…YVQT), 319–339 (FLLG…LVYN), and 378–398 (AVFL…WNSL).

Belongs to the major facilitator superfamily. DHA1 family. MdtG (TC 2.A.1.2.20) subfamily.

The protein localises to the cell inner membrane. Confers resistance to fosfomycin and deoxycholate. This chain is Multidrug resistance protein MdtG, found in Escherichia coli O81 (strain ED1a).